We begin with the raw amino-acid sequence, 332 residues long: Methionine synthase (332 aa).

His-211, Cys-213, and Cys-296 together coordinate Zn(2+).

Belongs to the archaeal MetE family. Zn(2+) is required as a cofactor.

The protein operates within amino-acid biosynthesis; L-methionine biosynthesis via de novo pathway. Catalyzes the transfer of a methyl group to L-homocysteine resulting in methionine formation. The physiological methyl donor is unknown. This chain is Methionine synthase, found in Saccharolobus islandicus (strain Y.N.15.51 / Yellowstone #2) (Sulfolobus islandicus).